The primary structure comprises 171 residues: uncharacterized protein (171 aa).

The N-terminal stretch at 1-17 (MLKRIIWILFLLGLTWG) is a signal peptide.

Its function is as follows. Part of the elfADCG-ycbUVF fimbrial operon, which promotes adhesion of bacteria to different abiotic surfaces. This is an uncharacterized protein from Escherichia coli (strain K12).